A 350-amino-acid chain; its full sequence is Quinolinate phosphoribosyltransferase [decarboxylating] 1b (350 aa).

Substrate is bound by residues R141, 172-174 (TRK), R196, K206, E239, D266, 298-300 (SGN), and 319-321 (SGA).

This sequence belongs to the NadC/ModD family.

The catalysed reaction is nicotinate beta-D-ribonucleotide + CO2 + diphosphate = quinolinate + 5-phospho-alpha-D-ribose 1-diphosphate + 2 H(+). It functions in the pathway alkaloid biosynthesis; nicotine biosynthesis. The protein operates within cofactor biosynthesis; NAD(+) biosynthesis; nicotinate D-ribonucleotide from quinolinate: step 1/1. Functionally, involved in the biosynthesis of pyridine alkaloid natural products, leading mainly to the production of anabasine, anatabine, nicotine and nornicotine, effective deterrents against herbivores with antiparasitic and pesticide properties (neurotoxins); nornicotine serves as the precursor in the synthesis of the carcinogen compound N'-nitrosonornicotine (NNN). Involved in the catabolism of quinolinic acid (QA). This chain is Quinolinate phosphoribosyltransferase [decarboxylating] 1b, found in Nicotiana tabacum (Common tobacco).